The chain runs to 122 residues: Large ribosomal subunit protein uL18 (122 aa).

The span at 1–19 shows a compositional bias: basic residues; it reads MSKLSRKQQTQKRHKRLRR. The segment at 1–27 is disordered; it reads MSKLSRKQQTQKRHKRLRRNLSGTESR.

This sequence belongs to the universal ribosomal protein uL18 family. As to quaternary structure, part of the 50S ribosomal subunit; part of the 5S rRNA/L5/L18/L25 subcomplex. Contacts the 5S and 23S rRNAs.

This is one of the proteins that bind and probably mediate the attachment of the 5S RNA into the large ribosomal subunit, where it forms part of the central protuberance. The chain is Large ribosomal subunit protein uL18 from Prochlorococcus marinus (strain NATL1A).